The sequence spans 1411 residues: DNA-directed RNA polymerase subunit beta' (1411 aa).

Zn(2+)-binding residues include Cys-70, Cys-72, Cys-85, and Cys-88. Residues Asp-458, Asp-460, and Asp-462 each contribute to the Mg(2+) site. Cys-813, Cys-887, Cys-894, and Cys-897 together coordinate Zn(2+). The disordered stretch occupies residues 1384-1411 (AEAAEMATTGSDEAPEVEGSGVESGSAE).

It belongs to the RNA polymerase beta' chain family. As to quaternary structure, the RNAP catalytic core consists of 2 alpha, 1 beta, 1 beta' and 1 omega subunit. When a sigma factor is associated with the core the holoenzyme is formed, which can initiate transcription. Mg(2+) is required as a cofactor. It depends on Zn(2+) as a cofactor.

It carries out the reaction RNA(n) + a ribonucleoside 5'-triphosphate = RNA(n+1) + diphosphate. DNA-dependent RNA polymerase catalyzes the transcription of DNA into RNA using the four ribonucleoside triphosphates as substrates. This chain is DNA-directed RNA polymerase subunit beta', found in Paracidovorax citrulli (strain AAC00-1) (Acidovorax citrulli).